A 148-amino-acid chain; its full sequence is Large ribosomal subunit protein bL9 (148 aa).

It belongs to the bacterial ribosomal protein bL9 family.

Binds to the 23S rRNA. In Syntrophobacter fumaroxidans (strain DSM 10017 / MPOB), this protein is Large ribosomal subunit protein bL9.